We begin with the raw amino-acid sequence, 181 residues long: Isopentenyl-diphosphate Delta-isomerase (181 aa).

Histidine 25 and histidine 32 together coordinate Mn(2+). Residues 30–164 (PLHLAFSCWL…PWAFSPWMVM (135 aa)) form the Nudix hydrolase domain. Cysteine 67 is a catalytic residue. Mg(2+) is bound at residue cysteine 67. A Mn(2+)-binding site is contributed by histidine 69. Mg(2+) is bound at residue glutamate 87. Mn(2+) contacts are provided by glutamate 114 and glutamate 116. Glutamate 116 is an active-site residue.

It belongs to the IPP isomerase type 1 family. As to quaternary structure, homodimer. The cofactor is Mg(2+). Requires Mn(2+) as cofactor.

The protein resides in the cytoplasm. The enzyme catalyses isopentenyl diphosphate = dimethylallyl diphosphate. The protein operates within isoprenoid biosynthesis; dimethylallyl diphosphate biosynthesis; dimethylallyl diphosphate from isopentenyl diphosphate: step 1/1. Catalyzes the 1,3-allylic rearrangement of the homoallylic substrate isopentenyl (IPP) to its highly electrophilic allylic isomer, dimethylallyl diphosphate (DMAPP). The polypeptide is Isopentenyl-diphosphate Delta-isomerase (Salmonella typhi).